A 177-amino-acid polypeptide reads, in one-letter code: Coatomer subunit zeta-1 (177 aa).

Belongs to the adaptor complexes small subunit family. Oligomeric complex that consists of at least the alpha, beta, beta', gamma, delta, epsilon and zeta subunits.

The protein resides in the cytoplasm. Its subcellular location is the golgi apparatus membrane. The protein localises to the cytoplasmic vesicle. It is found in the COPI-coated vesicle membrane. Functionally, the coatomer is a cytosolic protein complex that binds to dilysine motifs and reversibly associates with Golgi non-clathrin-coated vesicles, which further mediate biosynthetic protein transport from the ER, via the Golgi up to the trans Golgi network. Coatomer complex is required for budding from Golgi membranes, and is essential for the retrograde Golgi-to-ER transport of dilysine-tagged proteins. The zeta subunit may be involved in regulating the coat assembly and, hence, the rate of biosynthetic protein transport due to its association-dissociation properties with the coatomer complex. This chain is Coatomer subunit zeta-1, found in Arabidopsis thaliana (Mouse-ear cress).